The following is a 504-amino-acid chain: Cytochrome P450 monooxygenase iccC (504 aa).

The helical transmembrane segment at L7–S26 threads the bilayer. Residues N134, N312, N365, and N374 are each glycosylated (N-linked (GlcNAc...) asparagine). Residue C452 participates in heme binding. The N-linked (GlcNAc...) asparagine glycan is linked to N494.

The protein belongs to the cytochrome P450 family. The cofactor is heme.

The protein localises to the membrane. It carries out the reaction (3E,5S)-3-[(2E,4E,8S,10E,12Z)-1-hydroxy-4,8-dimethyltetradeca-2,4,10,12-tetraen-1-ylidene]-5-[(4-hydroxyphenyl)methyl]pyrrolidine-2,4-dione + reduced [NADPH--hemoprotein reductase] + O2 = 3-[(2E,4E,8S,10E,12Z)-4,8-dimethyltetradeca-2,4,10,12-tetraenoyl]-4-hydroxy-5-(4-hydroxyphenyl)-1,2-dihydropyridin-2-one + oxidized [NADPH--hemoprotein reductase] + 2 H2O. It participates in mycotoxin biosynthesis. In terms of biological role, cytochrome P450 monooxygenase; part of the gene cluster that mediates the biosynthesis of ilicicolin H, a 4-hydroxy-2-pyridonealkaloid that has potent and broad antifungal activities by inhibiting the mitochondrial respiration chain. IccC catalyzes the ring expansion of the tetramate intermediate to the acyclic 2-pyridone intermediate that contains the trans bis-diene chain. The biosynthesis of ilicicolin H starts with formation of the tetramic acid by the hybrid PKS-NRPS synthetase iccA with the partnering trans-enoyl reductase iccB since iccA lacks a designated enoylreductase (ER) domain. The cytochrome P450 monooxygenase iccC then catalyzes the ring expansion of the tetramate to the acyclic 2-pyridone. The pericyclase iccD further converts the acyclic 2-pyridone into 8-epi-ilicicolin H. Finally, the epimerase iccE converts 8-epi-ilicicolin H into ilicicolin H via epimerization. IccA to iccE are sufficient for ilicicolin H biosynthesis and the roles of the remaining enzymes, iccF, iccG and iccH within the pathway have still to be determined. In Talaromyces variabilis (Penicillium variabile), this protein is Cytochrome P450 monooxygenase iccC.